A 469-amino-acid polypeptide reads, in one-letter code: Ribulose bisphosphate carboxylase large chain (469 aa).

Lys5 carries the post-translational modification N6,N6,N6-trimethyllysine. 2 residues coordinate substrate: Asn114 and Thr164. Residue Lys166 is the Proton acceptor of the active site. Residue Lys168 coordinates substrate. 3 residues coordinate Mg(2+): Lys192, Asp194, and Glu195. Lys192 bears the N6-carboxylysine mark. His285 functions as the Proton acceptor in the catalytic mechanism. Substrate contacts are provided by Arg286, His318, and Ser370.

It belongs to the RuBisCO large chain family. Type I subfamily. As to quaternary structure, heterohexadecamer of 8 large chains and 8 small chains; disulfide-linked. The disulfide link is formed within the large subunit homodimers. It depends on Mg(2+) as a cofactor. In terms of processing, the disulfide bond which can form in the large chain dimeric partners within the hexadecamer appears to be associated with oxidative stress and protein turnover.

It localises to the plastid. It is found in the chloroplast. It catalyses the reaction 2 (2R)-3-phosphoglycerate + 2 H(+) = D-ribulose 1,5-bisphosphate + CO2 + H2O. The catalysed reaction is D-ribulose 1,5-bisphosphate + O2 = 2-phosphoglycolate + (2R)-3-phosphoglycerate + 2 H(+). Its function is as follows. RuBisCO catalyzes two reactions: the carboxylation of D-ribulose 1,5-bisphosphate, the primary event in carbon dioxide fixation, as well as the oxidative fragmentation of the pentose substrate in the photorespiration process. Both reactions occur simultaneously and in competition at the same active site. The sequence is that of Ribulose bisphosphate carboxylase large chain from Cephalanthus occidentalis (Common buttonbush).